Consider the following 202-residue polypeptide: Cutinase (202 aa).

An N-terminal signal peptide occupies residues 1–20 (MKTSAQQLLSALLLPLSVLA). The cysteines at positions 31 and 106 are disulfide-linked. Ser117 serves as the catalytic Nucleophile. Cys165 and Cys172 are joined by a disulfide. Asp169 is an active-site residue. Residue His182 is the Proton donor/acceptor of the active site.

It belongs to the cutinase family. In terms of processing, the 2 disulfide bonds play a critical role in holding the catalytic residues in juxta-position; reduction of the disulfide bridges results in the complete inactivation of the enzyme.

Its subcellular location is the secreted. It catalyses the reaction cutin + H2O = cutin monomers.. Catalyzes the hydrolysis of complex carboxylic polyesters found in the cell wall of plants. Degrades cutin, a macromolecule that forms the structure of the plant cuticle. Allows pathogenic fungi to penetrate through the cuticular barrier into the host plant during the initial stage of fungal infection. The protein is Cutinase of Botryotinia fuckeliana (Noble rot fungus).